The following is a 246-amino-acid chain: Sulfate transporter CysZ (246 aa).

Transmembrane regions (helical) follow at residues 24–44, 69–89, 148–168, and 214–234; these read LFVL…IGFA, IVWP…FTMV, LLVL…WILF, and LLIP…ATLF.

The protein belongs to the CysZ family.

It localises to the cell inner membrane. In terms of biological role, high affinity, high specificity proton-dependent sulfate transporter, which mediates sulfate uptake. Provides the sulfur source for the cysteine synthesis pathway. This Pseudomonas aeruginosa (strain LESB58) protein is Sulfate transporter CysZ.